We begin with the raw amino-acid sequence, 112 residues long: Large ribosomal subunit protein mL53 (112 aa).

The protein belongs to the mitochondrion-specific ribosomal protein mL53 family. Component of the mitochondrial ribosome large subunit (39S) which comprises a 16S rRNA and about 50 distinct proteins.

Its subcellular location is the mitochondrion. The chain is Large ribosomal subunit protein mL53 (MRPL53) from Bos taurus (Bovine).